A 231-amino-acid chain; its full sequence is 2-hydroxy-3-keto-5-methylthiopentenyl-1-phosphate phosphatase (231 aa).

This sequence belongs to the HAD-like hydrolase superfamily. MtnX family.

The catalysed reaction is 2-hydroxy-5-methylsulfanyl-3-oxopent-1-enyl phosphate + H2O = 1,2-dihydroxy-5-(methylsulfanyl)pent-1-en-3-one + phosphate. It participates in amino-acid biosynthesis; L-methionine biosynthesis via salvage pathway; L-methionine from S-methyl-5-thio-alpha-D-ribose 1-phosphate: step 4/6. Its function is as follows. Dephosphorylates 2-hydroxy-3-keto-5-methylthiopentenyl-1-phosphate (HK-MTPenyl-1-P) yielding 1,2-dihydroxy-3-keto-5-methylthiopentene (DHK-MTPene). This is 2-hydroxy-3-keto-5-methylthiopentenyl-1-phosphate phosphatase from Bacillus pumilus (strain SAFR-032).